Consider the following 371-residue polypeptide: 4-hydroxybutyrate dehydrogenase (371 aa).

NAD(+) contacts are provided by residues 88-92 (GSVID), 126-130 (TTCGT), and K148. Residues D182, H186, H253, and H267 each contribute to the Fe cation site. H267 contacts NAD(+).

The protein belongs to the iron-containing alcohol dehydrogenase family. Homodimer. Fe(2+) serves as cofactor. Requires Cu(2+) as cofactor.

It catalyses the reaction 4-hydroxybutanoate + NAD(+) = succinate semialdehyde + NADH + H(+). Its activity is regulated as follows. Inactivated by oxygen. Its function is as follows. Involved in the anaerobic succinate degradation pathway. Catalyzes the interconversion of gamma-hydroxybutyrate (GHB) and succinic semialdehyde (SSA). The chain is 4-hydroxybutyrate dehydrogenase from Clostridium kluyveri (strain ATCC 8527 / DSM 555 / NBRC 12016 / NCIMB 10680 / K1).